A 238-amino-acid chain; its full sequence is Probable transcriptional regulatory protein IL0164 (238 aa).

The protein belongs to the TACO1 family.

The protein resides in the cytoplasm. The sequence is that of Probable transcriptional regulatory protein IL0164 from Idiomarina loihiensis (strain ATCC BAA-735 / DSM 15497 / L2-TR).